The sequence spans 438 residues: Xylose isomerase (438 aa).

Catalysis depends on residues histidine 100 and aspartate 103. Residues glutamate 231, glutamate 267, histidine 270, aspartate 295, aspartate 306, aspartate 308, and aspartate 338 each coordinate Mg(2+).

This sequence belongs to the xylose isomerase family. Homotetramer. It depends on Mg(2+) as a cofactor.

The protein localises to the cytoplasm. The enzyme catalyses alpha-D-xylose = alpha-D-xylulofuranose. This Pseudomonas savastanoi pv. phaseolicola (strain 1448A / Race 6) (Pseudomonas syringae pv. phaseolicola (strain 1448A / Race 6)) protein is Xylose isomerase.